We begin with the raw amino-acid sequence, 186 residues long: Calcium load-activated calcium channel homolog (186 aa).

The Cytoplasmic portion of the chain corresponds to 1-6 (MLGDCL). Residues 7-27 (LIIAIAFGTALAGEGITWLLV) form a helical membrane-spanning segment. Over 28–87 (YRSDHYKRLKADMDKKTKKLEKKKQEVGDTNDKNIKRKLEREEERLKATNRDMSMFKMKS) the chain is Lumenal. The stretch at 30 to 86 (SDHYKRLKADMDKKTKKLEKKKQEVGDTNDKNIKRKLEREEERLKATNRDMSMFKMK) forms a coiled coil. A helical membrane pass occupies residues 88–108 (MFAIGLAFTALLSTFNSIFEG). At 109 to 134 (RVVAKLPFYPIGFIQGLSHRNLIGED) the chain is on the cytoplasmic side. An intramembrane region (pore-forming) is located at residues 135–151 (MTDCSFIFLYILCTMTV). Residues 152–186 (RQNLQKILGFAPSRAMARQQSSPWAPPNSQMNYLR) lie on the Cytoplasmic side of the membrane.

The protein belongs to the TMCO1 family. As to quaternary structure, homodimer and homotetramer.

Its subcellular location is the endoplasmic reticulum membrane. Functionally, calcium-selective channel required to prevent calcium stores from overfilling. The sequence is that of Calcium load-activated calcium channel homolog from Caenorhabditis elegans.